Reading from the N-terminus, the 566-residue chain is Putative ABC transporter ATP-binding protein BT9727_2424 (566 aa).

ABC transporter domains lie at 5–246 (ISFE…GLRE) and 300–533 (LKVE…ANLK). ATP-binding positions include 39–46 (GRSGSGKS) and 333–340 (GHNGAGKS).

This sequence belongs to the ABC transporter superfamily.

The protein localises to the cell membrane. Probably part of an ABC transporter complex. Responsible for energy coupling to the transport system. The chain is Putative ABC transporter ATP-binding protein BT9727_2424 from Bacillus thuringiensis subsp. konkukian (strain 97-27).